The chain runs to 656 residues: ATP-dependent zinc metalloprotease FtsH (656 aa).

The Cytoplasmic portion of the chain corresponds to 1–45; sequence MAIFARRIGLNQHSAYGSRQRVIVMKNFGKKALIKQQSPKRVAWT. A helical transmembrane segment spans residues 46-66; that stretch reads GALAASLIMLPTMFGGNPVLA. At 67–147 the chain is on the lumenal side; it reads QKAERESLSY…EISSANSRAA (81 aa). Residues 148–168 traverse the membrane as a helical segment; the sequence is VGLLINLMWILPLVALMLLFL. Topologically, residues 169–656 are cytoplasmic; it reads RRSTNASSQA…DEQLSMVNSQ (488 aa). 239 to 246 is an ATP binding site; the sequence is GPPGTGKT. Position 460 (His460) interacts with Zn(2+). The active site involves Glu461. 2 residues coordinate Zn(2+): His464 and Asp538.

In the central section; belongs to the AAA ATPase family. It in the C-terminal section; belongs to the peptidase M41 family. In terms of assembly, homohexamer. Requires Zn(2+) as cofactor.

It is found in the cellular thylakoid membrane. Functionally, acts as a processive, ATP-dependent zinc metallopeptidase for both cytoplasmic and membrane proteins. Plays a role in the quality control of integral membrane proteins. This chain is ATP-dependent zinc metalloprotease FtsH, found in Nostoc sp. (strain PCC 7120 / SAG 25.82 / UTEX 2576).